Consider the following 37-residue polypeptide: Cytochrome b6-f complex subunit 5 (37 aa).

Residues L5–A25 form a helical membrane-spanning segment.

It belongs to the PetG family. In terms of assembly, the 4 large subunits of the cytochrome b6-f complex are cytochrome b6, subunit IV (17 kDa polypeptide, PetD), cytochrome f and the Rieske protein, while the 4 small subunits are PetG, PetL, PetM and PetN. The complex functions as a dimer.

It is found in the plastid. Its subcellular location is the chloroplast thylakoid membrane. In terms of biological role, component of the cytochrome b6-f complex, which mediates electron transfer between photosystem II (PSII) and photosystem I (PSI), cyclic electron flow around PSI, and state transitions. PetG is required for either the stability or assembly of the cytochrome b6-f complex. This is Cytochrome b6-f complex subunit 5 from Porphyra purpurea (Red seaweed).